A 428-amino-acid chain; its full sequence is Leucine-rich repeat-containing protein 42 (428 aa).

LRR repeat units follow at residues 149-170 (VLCS…EEIK), 174-195 (ELTC…LEHL), 202-222 (SVTQ…RKMT), 234-255 (NLTL…GYLF), and 259-280 (KLNC…KHKL). Residues 379–412 (KHEAISSQESKKSKKRPFEESETEQNNSSQPSKQ) are disordered. Ser-406 and Ser-407 each carry phosphoserine.

This sequence belongs to the LRRC42 family.

The polypeptide is Leucine-rich repeat-containing protein 42 (LRRC42) (Homo sapiens (Human)).